A 125-amino-acid polypeptide reads, in one-letter code: Fluoride-specific ion channel FluC (125 aa).

Transmembrane regions (helical) follow at residues 9-29 (LFCA…YGLL), 32-52 (AFPY…GLIM), 67-87 (IGLT…SYET), and 99-119 (AFTN…LGII). The Na(+) site is built by Gly-75 and Thr-78.

Belongs to the fluoride channel Fluc/FEX (TC 1.A.43) family.

It localises to the cell inner membrane. The enzyme catalyses fluoride(in) = fluoride(out). With respect to regulation, na(+) is not transported, but it plays an essential structural role and its presence is essential for fluoride channel function. Its function is as follows. Fluoride-specific ion channel. Important for reducing fluoride concentration in the cell, thus reducing its toxicity. The protein is Fluoride-specific ion channel FluC of Trichlorobacter lovleyi (strain ATCC BAA-1151 / DSM 17278 / SZ) (Geobacter lovleyi).